Reading from the N-terminus, the 23-residue chain is Acidic phospholipase A2 CHA-E6b (23 aa).

The protein belongs to the phospholipase A2 family. Group II subfamily. D49 sub-subfamily. Ca(2+) is required as a cofactor. In terms of processing, contains 7 disulfide bonds. Expressed by the venom gland.

It localises to the secreted. The enzyme catalyses a 1,2-diacyl-sn-glycero-3-phosphocholine + H2O = a 1-acyl-sn-glycero-3-phosphocholine + a fatty acid + H(+). In terms of biological role, snake venom phospholipase A2 (PLA2) that shows high lipolytic (1200 umol/mg/min) and weak ADP-induced platelet aggregation activities. Also shows weak anticoagulant activity (IC(50) of about 1.0 uM). PLA2 catalyzes the calcium-dependent hydrolysis of the 2-acyl groups in 3-sn-phosphoglycerides. The chain is Acidic phospholipase A2 CHA-E6b from Crotalus horridus (Timber rattlesnake).